Consider the following 329-residue polypeptide: Phosphoenolpyruvate transferase (329 aa).

Asp-61 serves as a coordination point for 7,8-didemethyl-8-hydroxy-5-deazariboflavin.

Belongs to the CofD family. Homodimer. The cofactor is Mg(2+).

It catalyses the reaction enolpyruvoyl-2-diphospho-5'-guanosine + 7,8-didemethyl-8-hydroxy-5-deazariboflavin = dehydro coenzyme F420-0 + GMP + H(+). The protein operates within cofactor biosynthesis; coenzyme F420 biosynthesis. In terms of biological role, catalyzes the transfer of the phosphoenolpyruvate moiety from enoylpyruvoyl-2-diphospho-5'-guanosine (EPPG) to 7,8-didemethyl-8-hydroxy-5-deazariboflavin (FO) with the formation of dehydro coenzyme F420-0 and GMP. In Mycobacterium ulcerans (strain Agy99), this protein is Phosphoenolpyruvate transferase.